The primary structure comprises 260 residues: Hydroxypyruvate/pyruvate aldolase Bphyt_0320 (260 aa).

The active-site Proton acceptor is His48. Residues Glu157 and Asp183 each coordinate a divalent metal cation.

This sequence belongs to the HpcH/HpaI aldolase family. Mn(2+) serves as cofactor. Mg(2+) is required as a cofactor. It depends on Co(2+) as a cofactor.

It catalyses the reaction D-glyceraldehyde + 3-hydroxypyruvate = 2-dehydro-D-gluconate. The enzyme catalyses D-glyceraldehyde + pyruvate = 2-dehydro-3-deoxy-L-galactonate. The catalysed reaction is 2-dehydro-3-deoxy-D-gluconate = D-glyceraldehyde + pyruvate. Its function is as follows. Aldolase which can catalyze in vitro the aldolisation reaction between hydroxypyruvate (HPA) or pyruvate (PA) and D-glyceraldehyde (D-GA). The condensation of hydroxypyruvate and D-glyceraldehyde produces 2-dehydro-D-gluconate. The condensation of pyruvate and D-glyceraldehyde produces 2-dehydro-3-deoxy-L-galactonate as the major product and 2-dehydro-3-deoxy-D-gluconate. Also catalyzes the retro-aldol type decarboxylation of oxaloacetate, a general property of known pyruvate aldolases. This is Hydroxypyruvate/pyruvate aldolase Bphyt_0320 from Paraburkholderia phytofirmans (strain DSM 17436 / LMG 22146 / PsJN) (Burkholderia phytofirmans).